We begin with the raw amino-acid sequence, 265 residues long: Mlc titration factor A (265 aa).

Residues His-111, His-148, His-152, and Glu-211 each contribute to the Zn(2+) site.

Belongs to the MtfA family. As to quaternary structure, interacts with Mlc. It depends on Zn(2+) as a cofactor.

Its subcellular location is the cytoplasm. Functionally, involved in the modulation of the activity of the glucose-phosphotransferase system (glucose-PTS). Interacts with the transcriptional repressor Mlc, preventing its interaction with DNA and leading to the modulation of expression of genes regulated by Mlc, including ptsG, which encodes the PTS system glucose-specific EIICB component. In terms of biological role, shows zinc-dependent metallopeptidase activity. This chain is Mlc titration factor A, found in Escherichia coli (strain ATCC 8739 / DSM 1576 / NBRC 3972 / NCIMB 8545 / WDCM 00012 / Crooks).